Reading from the N-terminus, the 461-residue chain is Bifunctional protein HldE (461 aa).

Positions 1 to 311 (MKKILVVGDL…EEIALILNQT (311 aa)) are ribokinase. 191-194 (NRAE) is an ATP binding site. Residue D260 is part of the active site. The segment at 332–461 (FTNGCFDLLH…IEKIKRTHND (130 aa)) is cytidylyltransferase.

It in the N-terminal section; belongs to the carbohydrate kinase PfkB family. The protein in the C-terminal section; belongs to the cytidylyltransferase family. Homodimer.

It carries out the reaction D-glycero-beta-D-manno-heptose 7-phosphate + ATP = D-glycero-beta-D-manno-heptose 1,7-bisphosphate + ADP + H(+). It catalyses the reaction D-glycero-beta-D-manno-heptose 1-phosphate + ATP + H(+) = ADP-D-glycero-beta-D-manno-heptose + diphosphate. The protein operates within nucleotide-sugar biosynthesis; ADP-L-glycero-beta-D-manno-heptose biosynthesis; ADP-L-glycero-beta-D-manno-heptose from D-glycero-beta-D-manno-heptose 7-phosphate: step 1/4. Its pathway is nucleotide-sugar biosynthesis; ADP-L-glycero-beta-D-manno-heptose biosynthesis; ADP-L-glycero-beta-D-manno-heptose from D-glycero-beta-D-manno-heptose 7-phosphate: step 3/4. In terms of biological role, catalyzes the phosphorylation of D-glycero-D-manno-heptose 7-phosphate at the C-1 position to selectively form D-glycero-beta-D-manno-heptose-1,7-bisphosphate. Catalyzes the ADP transfer from ATP to D-glycero-beta-D-manno-heptose 1-phosphate, yielding ADP-D-glycero-beta-D-manno-heptose. This Helicobacter pylori (strain P12) protein is Bifunctional protein HldE.